Here is a 158-residue protein sequence, read N- to C-terminus: GTP-dependent dephospho-CoA kinase (158 aa).

Asp35, Val36, Asp54, Lys56, Glu109, and Asp132 together coordinate GTP.

This sequence belongs to the GTP-dependent DPCK family.

The enzyme catalyses 3'-dephospho-CoA + GTP = GDP + CoA + H(+). Its pathway is cofactor biosynthesis; coenzyme A biosynthesis. Catalyzes the GTP-dependent phosphorylation of the 3'-hydroxyl group of dephosphocoenzyme A to form coenzyme A (CoA). This Methanococcus maripaludis (strain C7 / ATCC BAA-1331) protein is GTP-dependent dephospho-CoA kinase.